Consider the following 242-residue polypeptide: Protein crossbronx (242 aa).

In terms of domain architecture, UBC core spans 20 to 176; the sequence is QQEYKILAEY…VQENIKESKA (157 aa).

The protein belongs to the ubiquitin-conjugating enzyme family. FTS subfamily.

In Drosophila ananassae (Fruit fly), this protein is Protein crossbronx (cbx).